The primary structure comprises 325 residues: Beta-ketoacyl-[acyl-carrier-protein] synthase III (325 aa).

Active-site residues include C113 and H250. The interval 251-255 (QANIR) is ACP-binding. The active site involves N280.

The protein belongs to the thiolase-like superfamily. FabH family. As to quaternary structure, homodimer.

The protein localises to the cytoplasm. It catalyses the reaction malonyl-[ACP] + acetyl-CoA + H(+) = 3-oxobutanoyl-[ACP] + CO2 + CoA. It participates in lipid metabolism; fatty acid biosynthesis. Functionally, catalyzes the condensation reaction of fatty acid synthesis by the addition to an acyl acceptor of two carbons from malonyl-ACP. Catalyzes the first condensation reaction which initiates fatty acid synthesis and may therefore play a role in governing the total rate of fatty acid production. Possesses both acetoacetyl-ACP synthase and acetyl transacylase activities. Its substrate specificity determines the biosynthesis of branched-chain and/or straight-chain of fatty acids. In Streptococcus suis (strain 98HAH33), this protein is Beta-ketoacyl-[acyl-carrier-protein] synthase III.